The sequence spans 198 residues: Dual specificity protein phosphatase 13B (198 aa).

The Tyrosine-protein phosphatase domain occupies 45 to 193; that stretch reads HINEVWPNLF…LQVLDNRLRR (149 aa). Catalysis depends on cysteine 138, which acts as the Phosphocysteine intermediate.

The protein belongs to the protein-tyrosine phosphatase family. Non-receptor class dual specificity subfamily. Most abundantly expressed in the testis.

The catalysed reaction is O-phospho-L-tyrosyl-[protein] + H2O = L-tyrosyl-[protein] + phosphate. It catalyses the reaction O-phospho-L-seryl-[protein] + H2O = L-seryl-[protein] + phosphate. The enzyme catalyses O-phospho-L-threonyl-[protein] + H2O = L-threonyl-[protein] + phosphate. Dual specificity phosphatase that dephosphorylates MAPK8/JNK and MAPK14/p38, but not MAPK1/ERK2, in vitro. Exhibits intrinsic phosphatase activity towards both phospho-seryl/threonyl and -tyrosyl residues, with similar specific activities in vitro. The protein is Dual specificity protein phosphatase 13B of Mus musculus (Mouse).